We begin with the raw amino-acid sequence, 1233 residues long: EGNEYLVRKNVERLSLSEMNSLIHAFRRMQKDKSSDGFEAIASFHALPPLCPSPTAKHRHACCLHGMATFPHWHRLYVVQFEQALHRHGATVGVPYWDWTRPISKIPDFIASEKYSDPFTKIEVYNPFNHGHISFISEDTTTKREVSEYLFEHPVLGKQTWLFDNIALALEQTDYCDFEIQLEIVHNAIHSWIGGKEEHSLNHLHYAAYDPIFYLHHSNVDRLWVIWQELQKLRGLNAYESHCALELMKVPLKPFSFGAPYNLNDLTTKLSKPEDMFRYKDNFHYEYDILDINSMSINQIESSYIRHQKDHDRVFAGFLLSGFGSSAYATFEICIEGGECHEGSHFAVLGGSTEMPWAFDRLYKIEITDVLSDMHLAFDSAFTIKTKIVAQNGTELPASILPEATVIRIPPSKQDADIDIPLNHIRRNVESLDERDIQNLMAALTRVKKDESDHGFQTIASYHGSTLCPSPEEPKYACCLHGMPVFPHWHRVYLLHFEDSMRRHGSSVATPYWDWTQPGTKLPRLLADSDYYDAWTDNVTENPFLRGYITSEDTYTVRDVKPELFEIGGGEGSTLYQQVLLMLEQEDYCDFEVQFEVVHNSIHYLVGGHQKYAMSSLVYSSFDPIFYVHHSMVDRLWAIWQALQEHRHLPFDKAYCALEQLSFPMKPFVWESNPNLHTRAASTPQHLFDYNKLGYKYDDLEFHGMNIDQLENAIHKTQNKDRVFASFLLFGIKTSADVHLKLCKDETCEDAGVVFVLGGDNEMPWPFDRTYKMDITNVLHKMHIPLEDLYVHGSTIHLEVKIESVDGKVLDSSSLPVPSMIYVPAKEFTKEIEKEAVRGTIIRKNVNSLTPSDIKELRDAMAKVQADTSDNGYQKIASYHGIPLSCHYENGTAYACCQHGMVTFPNWHRLLTKQMEDALVAKGSHVGIPYWDWTTTFANLPVLVTEEKDNSFHHAHIDVANTDTTRSPRAQLFDDPEKGDKSFFYRQIALALEQTDFCDFEIQFEIGHNAIHSWVGGSSPYGMSTLHYTSYDPLFYLHHSNTDRIWSVWQALQKYRGLPYNTANCEINKLVKPLKPFNLDTNPNAVTKAHSTGATSFDYHKLGYDYDNLNFHGMTIPELEEHLKEIQHEDRVFAGFLLRTIGQSADVNFDVCTKDGECTFGGTFCILGGEHEMFWAFDRPFKYDITTSLKHLRLDAHDDFDIKVTIKGIDGHVLSNKYLSPPTVFLAPAKTTH.

Residues 1–4 (EGNE) are ODD. The segment at 5-422 (YLVRKNVERL…KQDADIDIPL (418 aa)) is ODE. Histidine 45 is a binding site for Cu cation. Cysteine 51 and cysteine 62 are disulfide-bonded. The segment at residues 63–65 (CLH) is a cross-link (2'-(S-cysteinyl)-histidine (Cys-His)). Cu cation is bound by residues histidine 65, histidine 74, histidine 186, histidine 190, and histidine 217. 2 disulfide bridges follow: cysteine 176/cysteine 243 and cysteine 334/cysteine 340. Asparagine 392 carries N-linked (GlcNAc...) asparagine glycosylation. The interval 423–839 (NHIRRNVESL…KEIEKEAVRG (417 aa)) is ODF. Histidine 463 contributes to the Cu cation binding site. Cysteine 468 and cysteine 478 form a disulfide bridge. The segment at residues 479-481 (CLH) is a cross-link (2'-(S-cysteinyl)-histidine (Cys-His)). Cu cation contacts are provided by histidine 481 and histidine 490. A glycan (N-linked (GlcNAc...) asparagine) is linked at asparagine 538. Intrachain disulfides connect cysteine 589-cysteine 656 and cysteine 743-cysteine 748. Cu cation contacts are provided by histidine 599, histidine 603, and histidine 630. The tract at residues 840 to 1233 (TIIRKNVNSL…VFLAPAKTTH (394 aa)) is ODG. Residue histidine 880 coordinates Cu cation. A disulfide bridge links cysteine 886 with cysteine 896. N-linked (GlcNAc...) asparagine glycosylation is present at asparagine 890. The 2'-(S-cysteinyl)-histidine (Cys-His) cross-link spans 897–899 (CQH). Cu cation contacts are provided by histidine 899, histidine 908, histidine 1008, histidine 1012, and histidine 1039. 2 cysteine pairs are disulfide-bonded: cysteine 998/cysteine 1065 and cysteine 1152/cysteine 1158.

Belongs to the tyrosinase family. Hemocyanin subfamily. In terms of assembly, decamers of large identical subunits (350 kDa), each containing 7 globular oxygen-binding domains: ODA, ODB, ODC, ODD, ODE, ODF, and ODG. The cofactor is Cu(2+).

Hemocyanins are copper-containing oxygen carriers occurring freely dissolved in the hemolymph of many mollusks and arthropods. This Enteroctopus dofleini (North Pacific giant octopus) protein is Hemocyanin A-type, units Ode to Odg.